We begin with the raw amino-acid sequence, 179 residues long: SCAN domain-containing protein 1 (179 aa).

The tract at residues 1–107 (MAATEPILAT…AGSRLGPETF (107 aa)) is disordered. Over residues 52–80 (SPNAAVPEAIPTPRAAASAALELPLGPAP) the composition is skewed to low complexity. The 59-residue stretch at 108–166 (RQRFRQFRYQDAAGPREAFRQLRELSRQWLRPDIRTKEQIVEMLVQEQLLAILPEAARA) folds into the SCAN box domain.

Interacts with ZNF202.

Its subcellular location is the nucleus. In terms of biological role, may regulate transcriptional activity. The chain is SCAN domain-containing protein 1 (SCAND1) from Pan paniscus (Pygmy chimpanzee).